A 178-amino-acid chain; its full sequence is Cytochrome b6-f complex iron-sulfur subunit (178 aa).

A helical transmembrane segment spans residues 20–42 (LLTFGSVTGVALGSLYPVVKYFI). In terms of domain architecture, Rieske spans 68 to 161 (WLANHSDGDR…IAVENDNVFV (94 aa)). The [2Fe-2S] cluster site is built by Cys-107, His-109, Cys-125, and His-128. A disulfide bridge links Cys-112 with Cys-127.

This sequence belongs to the Rieske iron-sulfur protein family. The 4 large subunits of the cytochrome b6-f complex are cytochrome b6, subunit IV (17 kDa polypeptide, PetD), cytochrome f and the Rieske protein, while the 4 small subunits are PetG, PetL, PetM and PetN. The complex functions as a dimer. [2Fe-2S] cluster is required as a cofactor.

The protein resides in the cellular thylakoid membrane. The enzyme catalyses 2 oxidized [plastocyanin] + a plastoquinol + 2 H(+)(in) = 2 reduced [plastocyanin] + a plastoquinone + 4 H(+)(out). In terms of biological role, component of the cytochrome b6-f complex, which mediates electron transfer between photosystem II (PSII) and photosystem I (PSI), cyclic electron flow around PSI, and state transitions. This Prochlorococcus marinus (strain MIT 9303) protein is Cytochrome b6-f complex iron-sulfur subunit.